The primary structure comprises 808 residues: Leucine--tRNA ligase (808 aa).

The short motif at 40-51 is the 'HIGH' region element; that stretch reads PYPSGQGLHVGH. The 'KMSKS' region signature appears at 580-584; the sequence is KMSKS. Residue K583 coordinates ATP.

The protein belongs to the class-I aminoacyl-tRNA synthetase family.

Its subcellular location is the cytoplasm. It carries out the reaction tRNA(Leu) + L-leucine + ATP = L-leucyl-tRNA(Leu) + AMP + diphosphate. The protein is Leucine--tRNA ligase of Leuconostoc mesenteroides subsp. mesenteroides (strain ATCC 8293 / DSM 20343 / BCRC 11652 / CCM 1803 / JCM 6124 / NCDO 523 / NBRC 100496 / NCIMB 8023 / NCTC 12954 / NRRL B-1118 / 37Y).